The sequence spans 587 residues: ATP-dependent zinc metalloprotease FtsH 2 (587 aa).

Over 1–12 (MSSDRTREVTKR) the chain is Cytoplasmic. A helical transmembrane segment spans residues 13–33 (ILMVLFGLWLLQFFFLPPLTT). Residues 34-102 (RPTELSYSAF…EQRYEVTRTP (69 aa)) are Extracellular-facing. Residues 103-123 (WWVTLLPTVLWLAVMVGLFAW) traverse the membrane as a helical segment. Topologically, residues 124 to 587 (AQKRQAGAFG…GDDVRRILSA (464 aa)) are cytoplasmic. 192-199 (GPPGTGKT) is a binding site for ATP. His-416 contacts Zn(2+). Residue Glu-417 is part of the active site. His-420 and Asp-492 together coordinate Zn(2+).

In the central section; belongs to the AAA ATPase family. The protein in the C-terminal section; belongs to the peptidase M41 family. In terms of assembly, homohexamer. It depends on Zn(2+) as a cofactor.

The protein localises to the cell membrane. Acts as a processive, ATP-dependent zinc metallopeptidase for both cytoplasmic and membrane proteins. Plays a role in the quality control of integral membrane proteins. The chain is ATP-dependent zinc metalloprotease FtsH 2 from Symbiobacterium thermophilum (strain DSM 24528 / JCM 14929 / IAM 14863 / T).